The sequence spans 238 residues: 1-(5-phosphoribosyl)-5-[(5-phosphoribosylamino)methylideneamino] imidazole-4-carboxamide isomerase (238 aa).

Asp8 (proton acceptor) is an active-site residue. The active-site Proton donor is Asp130.

The protein belongs to the HisA/HisF family.

Its subcellular location is the cytoplasm. It catalyses the reaction 1-(5-phospho-beta-D-ribosyl)-5-[(5-phospho-beta-D-ribosylamino)methylideneamino]imidazole-4-carboxamide = 5-[(5-phospho-1-deoxy-D-ribulos-1-ylimino)methylamino]-1-(5-phospho-beta-D-ribosyl)imidazole-4-carboxamide. It functions in the pathway amino-acid biosynthesis; L-histidine biosynthesis; L-histidine from 5-phospho-alpha-D-ribose 1-diphosphate: step 4/9. This chain is 1-(5-phosphoribosyl)-5-[(5-phosphoribosylamino)methylideneamino] imidazole-4-carboxamide isomerase, found in Methanococcus vannielii (strain ATCC 35089 / DSM 1224 / JCM 13029 / OCM 148 / SB).